Consider the following 334-residue polypeptide: N,N'-diacetyllegionaminic acid synthase (334 aa).

Residues 282-334 (SLVAKKDIKKGEIFSEGNLTTKRPANGISAMRYEEFLGKIATKNYKEDELIRE) form the AFP-like domain.

The enzyme catalyses 2,4-diacetamido-2,4,6-trideoxy-alpha-D-mannopyranose + phosphoenolpyruvate + H2O = N,N-diacetyllegionaminate + phosphate. Involved in biosynthesis of legionaminic acid (5,7-diamino-3,5,7,9-tetradeoxy-D-glycero-D-galacto-non-2-ulosonic acid)(Leg), a sialic acid-like derivative that is incorporated into flagellin via O-linkage to Ser/Thr. Catalyzes the condensation of 2,4-diacetamido-2,4,6-trideoxymannose with phosphoenolpyruvate (PEP) to give N,N'-diacetyllegionaminic acid. This is N,N'-diacetyllegionaminic acid synthase (legI) from Campylobacter jejuni subsp. jejuni serotype O:2 (strain ATCC 700819 / NCTC 11168).